The chain runs to 1370 residues: MAYSIANNPLLRKNFAKIKKIIDIPNLIDIQKNSYKRFLQLDVPAEARKYSGLEAVFKSVFPIKDFSETASLEYVSYSLGIPKYDVEECHQRGMTFAAPMKVKVRLVVWDVNKEPSTRSIRDIKEQEVYFGEIPLMTENGTFIINGTERVIVSQLHRSPGVFYDHDKGKTHSSGKVLYSARVIPYRGSWLDFEFDHKDILYVRIDRRRKMPATVLLKALGYSTDELLNFFYKSEEINFAGEKLTKVADPELLTNQKAAIDIVDSATGEVLVKANRKFTKAAIRKMAEHGIKFIPITIEELVGKISSHDIVDPSTGEIVAECNEELTQAKLEEIKSKGINTFKVLFIDNLHVTSSFRDTIIIDKIGSTDDALIEIYRRLRPGDPPTLKSALSLFENLFFNPERYDLSAVGRLKLNYKLGLQVPLDCMTLTREDVLEVVRYLIDLKNGRGNIDDIDHLGNRRVRAVGELLENQYRIGLVRMERAIKERMSLQEVENLMPHDLINSKPVSAVVKEFFGSSQLSQFMDQTNPLSEVTHKRRLSALGPGGLTRERAGFEVRDVHPTHYGRVCPIETPEGPNIGLIASLSTYARINEHGFVETPYRLVQEGKVTNEVRFFSALEEEGHAIAQANAEVDKDGRFVADYISARKSGEFVLVGRDELELMDVAPMQLVSVAASLIPFLENDDANRALMGSNMQRQAVPLLRADSPLVGTGMERVVARDSGVSVVARHNGVVESVDASRIVVKIDEDEYDETGTGVDIYNLIKFARSNQNTCINQRPVVKIGDHVKRGDVIADGPSTDMGELALGQNVLVAFMPWGGYNFEDSILISERLVKDDRYTSIHIEEFECVARDTKLGKEEITADIPNLGEETLKDLDESGIIRIGAEVRPGDILIGKITPKGETQLSPEEKLLRAIFGEKAGDVRDTSLRVPPGVEGTVIGAKIFSRKGADKDARTELIEQAEEKKLRKDEQDEIRIIRESAVSKLKKLLVGKTAAVKVEGKDGKILIVKGKAISEEALSSIPIDRWDEISVADDESTDDKVAQILSTLNQQIDIIKYVFDDKVQKLKRGDDLPPGVIKMVKVYIAIKRKLQVGDKMAGRHGNKGVVSRILPEEDMPYLEDGRPVEIVLNPLGVPSRMNVGQILETHLGWAAKGIGWQIEEMLEKNSEKTKIKTYLKEVYGNKEMNKFLDTLDDEELSNVAKRLKRGVPMASPVFEGSSEEGIREMLGKAGFAHTAQVTLYDGKSGDAFKHKVTVGVMYVLKLHHLVDDKIHARSIGPYSLVTQQPLGGKAQFGGQRLGEMEVWAMEAYGAAYALQEFLTVKSDDVAGRTRMYEAIVKGKHTLEPGLPESFNVLIKELQSLGLDVELLENEED.

It belongs to the RNA polymerase beta chain family. The RNAP catalytic core consists of 2 alpha, 1 beta, 1 beta' and 1 omega subunit. When a sigma factor is associated with the core the holoenzyme is formed, which can initiate transcription.

It carries out the reaction RNA(n) + a ribonucleoside 5'-triphosphate = RNA(n+1) + diphosphate. DNA-dependent RNA polymerase catalyzes the transcription of DNA into RNA using the four ribonucleoside triphosphates as substrates. This Geotalea daltonii (strain DSM 22248 / JCM 15807 / FRC-32) (Geobacter daltonii) protein is DNA-directed RNA polymerase subunit beta.